We begin with the raw amino-acid sequence, 747 residues long: Putative ankyrin repeat protein FPV222 (747 aa).

ANK repeat units lie at residues 38–67 (DNCT…DPNI), 103–132 (NYRN…LVNM), 136–165 (KNIT…NTNA), 169–198 (YGET…NVNV), 202–231 (DSIT…DTNA), 234–263 (LERF…NTNV), 294–323 (PCTV…NPDI), 328–357 (TSTY…YTDV), 361–393 (QQNT…SFNL), 397–426 (KGRT…DTNI), 430–460 (MSFT…DPNL), 464–493 (KEVS…DIKP), 495–524 (NECY…ELEV), and 529–559 (DHYV…DLNK).

This Vertebrata (FPV) protein is Putative ankyrin repeat protein FPV222.